Here is a 165-residue protein sequence, read N- to C-terminus: Phosphopantetheine adenylyltransferase (165 aa).

Serine 10 contacts substrate. ATP contacts are provided by residues 10-11 and histidine 18; that span reads SF. Lysine 42, leucine 74, and arginine 88 together coordinate substrate. Residues 89-91, glutamate 99, and 124-130 contribute to the ATP site; these read GLR and YSFISSS.

This sequence belongs to the bacterial CoaD family. As to quaternary structure, homohexamer. It depends on Mg(2+) as a cofactor.

Its subcellular location is the cytoplasm. It carries out the reaction (R)-4'-phosphopantetheine + ATP + H(+) = 3'-dephospho-CoA + diphosphate. It participates in cofactor biosynthesis; coenzyme A biosynthesis; CoA from (R)-pantothenate: step 4/5. Reversibly transfers an adenylyl group from ATP to 4'-phosphopantetheine, yielding dephospho-CoA (dPCoA) and pyrophosphate. In Macrococcus caseolyticus (strain JCSC5402) (Macrococcoides caseolyticum), this protein is Phosphopantetheine adenylyltransferase.